We begin with the raw amino-acid sequence, 407 residues long: Arginine deiminase (407 aa).

Catalysis depends on cysteine 397, which acts as the Amidino-cysteine intermediate.

Belongs to the arginine deiminase family.

It is found in the cytoplasm. It catalyses the reaction L-arginine + H2O = L-citrulline + NH4(+). It functions in the pathway amino-acid degradation; L-arginine degradation via ADI pathway; carbamoyl phosphate from L-arginine: step 1/2. This chain is Arginine deiminase, found in Listeria welshimeri serovar 6b (strain ATCC 35897 / DSM 20650 / CCUG 15529 / CIP 8149 / NCTC 11857 / SLCC 5334 / V8).